We begin with the raw amino-acid sequence, 402 residues long: Chorismate synthase (402 aa).

R40 and R46 together coordinate NADP(+). FMN is bound by residues 134-136, 255-256, G299, 314-318, and R340; these read RAS, QA, and KPIAT.

The protein belongs to the chorismate synthase family. In terms of assembly, homotetramer. The cofactor is FMNH2.

It carries out the reaction 5-O-(1-carboxyvinyl)-3-phosphoshikimate = chorismate + phosphate. It participates in metabolic intermediate biosynthesis; chorismate biosynthesis; chorismate from D-erythrose 4-phosphate and phosphoenolpyruvate: step 7/7. Its function is as follows. Catalyzes the anti-1,4-elimination of the C-3 phosphate and the C-6 proR hydrogen from 5-enolpyruvylshikimate-3-phosphate (EPSP) to yield chorismate, which is the branch point compound that serves as the starting substrate for the three terminal pathways of aromatic amino acid biosynthesis. This reaction introduces a second double bond into the aromatic ring system. In Leifsonia xyli subsp. xyli (strain CTCB07), this protein is Chorismate synthase.